The following is a 676-amino-acid chain: Capsid vertex component 1 (676 aa).

Low complexity predominate over residues 253–264 (HPVRPSSSRVAS). A disordered region spans residues 253-308 (HPVRPSSSRVASGLLQSAKGHGAQTSNTDPINNGSFDGVLEPPGQGRFTGKKNNSS). Over residues 275–287 (AQTSNTDPINNGS) the composition is skewed to polar residues.

This sequence belongs to the herpesviridae CVC1 protein family. Interacts (via C-terminus) with capsid vertex component 2/CVC2.

Its subcellular location is the virion. It is found in the host nucleus. In terms of biological role, capsid vertex-specific component that plays a role during viral DNA encapsidation, assuring correct genome cleavage and presumably stabilizing capsids that contain full-length viral genomes. The chain is Capsid vertex component 1 from Varicella-zoster virus (strain Dumas) (HHV-3).